Here is a 1171-residue protein sequence, read N- to C-terminus: MHIKEICLEGFKSYATRTVVPGFDPHFNAITGLNGSGKSNILDSICFVLGITNLQQVRAANLQELVYKQGQAGITRATVSVTFDNSERNRSPLGHEDHSEITVTRQIVVGGKNKYLINGKLAQPNQVQNLFHSVQLNVNNPHFLIMQGRITKVLNMKPMEILSMLEEAAGTRMYENKKEAALKTLEKKQTKVDEINKLLEKDILPALEKLRREKSQYMQWANGNAELDRLKRFCVAFEYVQAEKIRDNSIHVVEEMKIKMTGIDEQTDKTQGEISELEKQIKALTQAREASMGGEVKALSDKVDSLSNEVTRELSKLTNMEDTLQGEEKNAEKMVHNIEDLKKSVEERASALNKCDEGAAELKQKFQEFSTTLEECEREHQGILAGKSSGDEEKCLEDQLRDAKISVGTAETELKQLNTKISHCEKELKEKKSQLMSKQDEAVAVENELDARKNDVESVKRAFDSLPYKEGQMEALEKDRESELEIGHRLKDKVHELSAQLANVQFTYRDPVKNFDRSKVKGVVAKLIKVNDRSSMTALEVTAGGKLFNVIVDTEDTGKQLLQKGDLRRRVTIIPLNKIQSHLVPPRVQQATVGKGNAELALSLVGYSEELKNAMEYVFGSTFVCKTTDAAKEVAFNREIRTPSVTLEGDVFQPSGLLTGGSRKGGGDLLRQLHDLAEAETKFRAHQKSLSEIEANIKELQPLQTKFTDMKAQLELKMYDMSLFLKRAEQNEHHKLGDAVKKLEEEVEEMRSQIKEKEGLYKSCADTVSTLEKSIKDHDKNREGRLKDLEKNIKTLKARIQASSKDLKGHENVRERLVMEQEAVTQEQSYLKSQLTSLRTQISTLASDVGNQRAKVDAIQKDHDQSLSELKLIHAKMKECDTQISGSIAEQEKCLQKISDMKLDRKKLENEVTRMEMEHKNCSVKVDKLVEKHTWITSEKRLFGNGGTDYDFESRDPHKAREELERLQTDQSSLEKRVNKKVTAMFEKAEDEYNALMTKKNIIETDKSKIKKVIEELDEKKKETLKVTWVKVNQDFGSIFSTLLPGTMSKLEPPEGGTFLDGLEVRVAFGDVWKQSLSELSGGQRSLLALSLILALLLFKPAPIYILDEVDAALDLSHTQNIGRMIKSHFPHSQFIVVSLKEGMFSNADVLFRTKFVDGVSTVQRTVTKQS.

The Zinc-hook domain occupies 2–1158; that stretch reads HIKEICLEGF…DVLFRTKFVD (1157 aa). ATP is bound at residue 32–39; sequence GLNGSGKS. Residues 172-510 are a coiled coil; sequence RMYENKKEAA…LANVQFTYRD (339 aa). The SMC hinge domain occupies 518–635; it reads SKVKGVVAKL…KTTDAAKEVA (118 aa). Residues 674-1026 adopt a coiled-coil conformation; sequence HDLAEAETKF…LDEKKKETLK (353 aa).

It belongs to the SMC family. SMC2 subfamily. In terms of assembly, forms a heterodimer with SMC4. Component of the condensin complex, which contains the SMC2 and SMC4 heterodimer, and three non SMC subunits that probably regulate the complex: CAPH, CAPD2 and CAPG. In terms of tissue distribution, highly expressed in roots and young floral buds.

The protein localises to the nucleus. Central component of the condensin complex, a complex required for conversion of interphase chromatin into mitotic-like condense chromosomes. The condensin complex probably introduces positive supercoils into relaxed DNA in the presence of type I topoisomerases and converts nicked DNA into positive knotted forms in the presence of type II topoisomerases. Also involved in chromosome segregation in meiosis. The sequence is that of Structural maintenance of chromosomes protein 2-2 (SMC2-2) from Arabidopsis thaliana (Mouse-ear cress).